The sequence spans 279 residues: 32 kDa beta-galactoside-binding lectin (279 aa).

Galectin domains lie at 13-144 (YRSV…VHWG) and 152-279 (YESG…IQIQ). 213 to 219 (WGNEERE) serves as a coordination point for a beta-D-galactoside.

Post-translationally, the N-terminus is blocked.

Its function is as follows. Binds galactose. The chain is 32 kDa beta-galactoside-binding lectin (lec-1) from Caenorhabditis elegans.